Consider the following 143-residue polypeptide: Large ribosomal subunit protein uL11 (143 aa).

It belongs to the universal ribosomal protein uL11 family. In terms of assembly, part of the ribosomal stalk of the 50S ribosomal subunit. Interacts with L10 and the large rRNA to form the base of the stalk. L10 forms an elongated spine to which L12 dimers bind in a sequential fashion forming a multimeric L10(L12)X complex. Post-translationally, one or more lysine residues are methylated.

In terms of biological role, forms part of the ribosomal stalk which helps the ribosome interact with GTP-bound translation factors. The chain is Large ribosomal subunit protein uL11 from Ectopseudomonas mendocina (strain ymp) (Pseudomonas mendocina).